Here is a 75-residue protein sequence, read N- to C-terminus: Translational regulator CsrA (75 aa).

It belongs to the CsrA/RsmA family. Homodimer; the beta-strands of each monomer intercalate to form a hydrophobic core, while the alpha-helices form wings that extend away from the core.

The protein localises to the cytoplasm. In terms of biological role, a translational regulator that binds mRNA to regulate translation initiation and/or mRNA stability. Usually binds in the 5'-UTR at or near the Shine-Dalgarno sequence preventing ribosome-binding, thus repressing translation. Its main target seems to be the major flagellin gene, while its function is anatagonized by FliW. In Alkaliphilus metalliredigens (strain QYMF), this protein is Translational regulator CsrA.